Consider the following 323-residue polypeptide: Acetyl-coenzyme A carboxylase carboxyl transferase subunit alpha (323 aa).

Residues leucine 40–threonine 293 form the CoA carboxyltransferase C-terminal domain.

It belongs to the AccA family. In terms of assembly, acetyl-CoA carboxylase is a heterohexamer composed of biotin carboxyl carrier protein (AccB), biotin carboxylase (AccC) and two subunits each of ACCase subunit alpha (AccA) and ACCase subunit beta (AccD).

It is found in the cytoplasm. It carries out the reaction N(6)-carboxybiotinyl-L-lysyl-[protein] + acetyl-CoA = N(6)-biotinyl-L-lysyl-[protein] + malonyl-CoA. It participates in lipid metabolism; malonyl-CoA biosynthesis; malonyl-CoA from acetyl-CoA: step 1/1. Component of the acetyl coenzyme A carboxylase (ACC) complex. First, biotin carboxylase catalyzes the carboxylation of biotin on its carrier protein (BCCP) and then the CO(2) group is transferred by the carboxyltransferase to acetyl-CoA to form malonyl-CoA. In Polynucleobacter asymbioticus (strain DSM 18221 / CIP 109841 / QLW-P1DMWA-1) (Polynucleobacter necessarius subsp. asymbioticus), this protein is Acetyl-coenzyme A carboxylase carboxyl transferase subunit alpha.